The sequence spans 344 residues: Ureide permease 3 (344 aa).

Topologically, residues 1-10 (MYVIESKGGT) are extracellular. A helical transmembrane segment spans residues 11–31 (ITCMLLALLFLGTWPAIMTLT). Over 32–42 (ERRGRLPQHTY) the chain is Cytoplasmic. Residues 43 to 63 (LDYTLTNLLAAVIIAFTLGEI) form a helical membrane-spanning segment. Over 64 to 78 (SPSRPNFTTQLSQDN) the chain is Extracellular. Residues 79 to 99 (WPSVMFAMAGGIFLSLGTLAT) traverse the membrane as a helical segment. Residues 100-101 (QY) lie on the Cytoplasmic side of the membrane. A helical transmembrane segment spans residues 102-122 (AWAFVGLSVTEVITASIAVVI). The Extracellular portion of the chain corresponds to 123–136 (GTTLNYFLDDRINR). Residues 137–157 (AEVLFPGVACFLIAVCFGSAV) traverse the membrane as a helical segment. Over 158–208 (HKSNAADNKSKLQGFKSLETTSSFQMETSSIKEGKAKVGTADFLIEVEKQR) the chain is Cytoplasmic. 209–216 (AIKVFGKS) is a binding site for ATP. Residues 209–229 (AIKVFGKSTIIGLAITFFAVP) form a helical membrane-spanning segment. Topologically, residues 230–235 (KLNVYT) are extracellular. A helical membrane pass occupies residues 236–256 (AFFYFSISSFGVGLILNIIFL). Topologically, residues 257 to 278 (YWPILGLPRSSFKAYLNDWNGR) are cytoplasmic. Residues 279-299 (GWSFLAGFLCGFGNGLQFMGG) traverse the membrane as a helical segment. The Extracellular portion of the chain corresponds to 300–344 (QAAGYAAAGAVQIENKHFGGYCCLENTKDHQEKHIHFLSVCYLCS).

The protein belongs to the plant ureide permease (TC 2.A.7.19) family.

The protein localises to the membrane. Proton-coupled transporter that transports a wide spectrum of oxo derivatives of heterocyclic nitrogen compounds. This chain is Ureide permease 3, found in Arabidopsis thaliana (Mouse-ear cress).